A 681-amino-acid polypeptide reads, in one-letter code: Structure-specific endonuclease subunit SLX4 (681 aa).

Disordered regions lie at residues 239–305 (EREK…QEQL) and 505–528 (EVTGEAEDGPSIIQVPSSPGNENL). The span at 251–261 (SDSSPEPTQLL) shows a compositional bias: polar residues. Residues 265–281 (IIEEEHEVDEEEEDNEN) are compositionally biased toward acidic residues. 2 stretches are compositionally biased toward polar residues: residues 288 to 305 (QLASSPTQISSDDTQEQL) and 518 to 528 (QVPSSPGNENL).

This sequence belongs to the SLX4 family. In terms of assembly, forms a heterodimer with SLX1. In terms of processing, phosphorylated in response to DNA damage.

Its subcellular location is the nucleus. In terms of biological role, regulatory subunit of the SLX1-SLX4 structure-specific endonuclease that resolves DNA secondary structures generated during DNA repair and recombination. Has endonuclease activity towards branched DNA substrates, introducing single-strand cuts in duplex DNA close to junctions with ss-DNA. In Meyerozyma guilliermondii (strain ATCC 6260 / CBS 566 / DSM 6381 / JCM 1539 / NBRC 10279 / NRRL Y-324) (Yeast), this protein is Structure-specific endonuclease subunit SLX4.